The chain runs to 1192 residues: ATP-dependent helicase/deoxyribonuclease subunit B (1192 aa).

It belongs to the helicase family. AddB/RexB type 2 subfamily. In terms of assembly, heterodimer of AddA and RexB. Requires Mg(2+) as cofactor.

In terms of biological role, the heterodimer acts as both an ATP-dependent DNA helicase and an ATP-dependent, dual-direction single-stranded exonuclease. Recognizes the chi site generating a DNA molecule suitable for the initiation of homologous recombination. This subunit has 5' -&gt; 3' nuclease activity but not helicase activity. The protein is ATP-dependent helicase/deoxyribonuclease subunit B of Pediococcus pentosaceus (strain ATCC 25745 / CCUG 21536 / LMG 10740 / 183-1w).